The sequence spans 325 residues: Beta-1,3-galactosyltransferase brn (325 aa).

Topologically, residues 1–7 (MQSKHRK) are cytoplasmic. The chain crosses the membrane as a helical; Signal-anchor for type II membrane protein span at residues 8 to 28 (LLLRCLLVLPLILLVDYCGLL). At 29 to 325 (THLHELNFER…WNECRSANYA (297 aa)) the chain is on the lumenal side. N-linked (GlcNAc...) asparagine glycans are attached at residues Asn149 and Asn166.

The protein belongs to the glycosyltransferase 31 family.

It localises to the golgi apparatus membrane. It catalyses the reaction a ganglioside GM2 (d18:1(4E)) + UDP-alpha-D-galactose = a ganglioside GM1 (d18:1(4E)) + UDP + H(+). In terms of biological role, neurogenic protein essential for the development and maintenance of epithelial structure. Required in the germline for establishing the follicular epithelium and for determining the dorsal-ventral polarity. Collaborates with Notch on the apical surface of follicle cells to mediate germline-follicle cell adhesion. Brn has a role in chorion formation. In Drosophila melanogaster (Fruit fly), this protein is Beta-1,3-galactosyltransferase brn (brn).